Here is a 577-residue protein sequence, read N- to C-terminus: Lysine-specific demethylase 7B (577 aa).

A PHD-type zinc finger spans residues 5–56 (QLYCVCRQPYDVSRFMIECDICKDWFHGSCVEVEEHYAVDIDVYHCPNCDVH). The JmjC domain occupies 198–354 (FSDTKMAELV…MQLRCYEMER (157 aa)). Position 247 (Thr247) interacts with substrate. Fe cation-binding residues include His250 and Asp252. Lys267 is a substrate binding site. His322 contacts Fe cation. Positions 460–513 (CPSTRSAHERGSHARKTARRLRGHHHHHHRHHHHHHHHHHHNHQHSDGPKAPSH) are disordered. The span at 472-502 (HARKTARRLRGHHHHHHRHHHHHHHHHHHNH) shows a compositional bias: basic residues.

This sequence belongs to the JHDM1 histone demethylase family. JHDM1D subfamily. Fe(2+) is required as a cofactor. As to expression, predominantly expressed in brain.

It is found in the nucleus. Functionally, histone demethylase required for brain development. Specifically demethylates dimethylated 'Lys-9' and 'Lys-27' (H3K9me2 and H3K27me2, respectively) of histone H3 and monomethylated histone H4 'Lys-20' residue (H4K20Me1), thereby playing a central role in histone code. This is Lysine-specific demethylase 7B (jhdm1db) from Danio rerio (Zebrafish).